The primary structure comprises 350 residues: Beta-hexosaminidase (350 aa).

Substrate contacts are provided by residues D62, R70, R133, and 163 to 164; that span reads KH. H176 serves as the catalytic Proton donor/acceptor. D248 acts as the Nucleophile in catalysis.

The protein belongs to the glycosyl hydrolase 3 family. NagZ subfamily.

It localises to the cytoplasm. It catalyses the reaction Hydrolysis of terminal non-reducing N-acetyl-D-hexosamine residues in N-acetyl-beta-D-hexosaminides.. It participates in cell wall biogenesis; peptidoglycan recycling. Its function is as follows. Plays a role in peptidoglycan recycling by cleaving the terminal beta-1,4-linked N-acetylglucosamine (GlcNAc) from peptide-linked peptidoglycan fragments, giving rise to free GlcNAc, anhydro-N-acetylmuramic acid and anhydro-N-acetylmuramic acid-linked peptides. The chain is Beta-hexosaminidase from Haemophilus influenzae (strain PittEE).